A 456-amino-acid chain; its full sequence is NADH oxidase (456 aa).

N10 contacts FAD. The Proton acceptor role is filled by H11. Residues A12, D34, Q35, C44, V81, A110, S113, K143, and Y170 each coordinate FAD. The active-site Redox-active is C44. Residue C44 is modified to Cysteine sulfinic acid (-SO2H). NAD(+) is bound by residues I171, D190, Y199, and G254. D292 contacts FAD. NAD(+) is bound at residue A308. FAD-binding residues include L309, A310, and S311. An NAD(+)-binding site is contributed by G339. FAD is bound at residue F436.

The cofactor is FAD.

The enzyme catalyses 2 NADH + O2 + 2 H(+) = 2 NAD(+) + 2 H2O. Catalyzes the four-electron reduction of molecular oxygen to water. The protein is NADH oxidase of Streptococcus pyogenes serotype M6 (strain ATCC BAA-946 / MGAS10394).